A 169-amino-acid polypeptide reads, in one-letter code: Glycine-rich RNA-binding protein GRP2A (169 aa).

The RRM domain maps to 8-86 (YRCFVGGLAW…RSITVNEAQS (79 aa)). Disordered regions lie at residues 69–100 (MNGQDLDGRSITVNEAQSRGSGAGGGGRGGGG) and 125–169 (YSGG…GGGW). The span at 89–100 (SGAGGGGRGGGG) shows a compositional bias: gly residues.

In terms of tissue distribution, predominantly expressed in meristematic and growing tissue.

The protein resides in the nucleus. Its function is as follows. May play a general role in circadian phenomena associated with meristematic tissue. The sequence is that of Glycine-rich RNA-binding protein GRP2A from Sinapis alba (White mustard).